The sequence spans 566 residues: Malate synthase, glyoxysomal (566 aa).

The Proton acceptor role is filled by R179. Catalysis depends on D465, which acts as the Proton donor. Residues 564–566 (SRL) carry the Microbody targeting signal motif.

The protein belongs to the malate synthase family.

Its subcellular location is the glyoxysome. It catalyses the reaction glyoxylate + acetyl-CoA + H2O = (S)-malate + CoA + H(+). It participates in carbohydrate metabolism; glyoxylate cycle; (S)-malate from isocitrate: step 2/2. The sequence is that of Malate synthase, glyoxysomal (MLS) from Raphanus sativus (Radish).